The chain runs to 384 residues: Lipid-A-disaccharide synthase 1 (384 aa).

This sequence belongs to the LpxB family.

The enzyme catalyses a lipid X + a UDP-2-N,3-O-bis[(3R)-3-hydroxyacyl]-alpha-D-glucosamine = a lipid A disaccharide + UDP + H(+). It functions in the pathway bacterial outer membrane biogenesis; LPS lipid A biosynthesis. Its function is as follows. Condensation of UDP-2,3-diacylglucosamine and 2,3-diacylglucosamine-1-phosphate to form lipid A disaccharide, a precursor of lipid A, a phosphorylated glycolipid that anchors the lipopolysaccharide to the outer membrane of the cell. This Legionella pneumophila (strain Paris) protein is Lipid-A-disaccharide synthase 1.